Here is a 258-residue protein sequence, read N- to C-terminus: Thiamine thiazole synthase (258 aa).

Residues Ala36, 55-56, Gly63, Val127, and 154-156 contribute to the NAD(+) site; these read EK and HVD. Fe cation contacts are provided by Asp156 and His171. Residue Met224 coordinates NAD(+). A glycine-binding site is contributed by Arg234.

This sequence belongs to the THI4 family. As to quaternary structure, homooctamer; tetramer of dimers. The cofactor is Fe(2+).

The enzyme catalyses hydrogen sulfide + glycine + NAD(+) = ADP-5-ethyl-4-methylthiazole-2-carboxylate + nicotinamide + 3 H2O + H(+). Its pathway is cofactor biosynthesis; thiamine diphosphate biosynthesis. Functionally, involved in the biosynthesis of the thiazole moiety of thiamine. Catalyzes the conversion of NAD and glycine to adenosine diphosphate 5-(2-hydroxyethyl)-4-methylthiazole-2-carboxylate (ADT), an adenylated thiazole intermediate, using free sulfide as a source of sulfur. This is Thiamine thiazole synthase from Methanococcoides burtonii (strain DSM 6242 / NBRC 107633 / OCM 468 / ACE-M).